The following is a 319-amino-acid chain: tRNA (guanine(9)-N(1))-methyltransferase Trmt10A (319 aa).

Disordered regions lie at residues 16–87 (LSLN…KRQL) and 275–319 (AKIT…SLDS). The segment covering 17–33 (SLNNCPGTTPGTPMSKN) has biased composition (polar residues). A Nuclear localization signal motif is present at residues 35–42 (LKKQRKLA). Composition is skewed to basic and acidic residues over residues 40 to 58 (KLAE…EREK), 78 to 87 (SRKELKKRQL), and 276 to 302 (KITD…ESDK). A coiled-coil region spans residues 44-67 (FAELRKLRREREREKKKQKRREAK). An SAM-dependent MTase TRM10-type domain is found at 83-274 (KKRQLADGGK…ETIPMRKGAK (192 aa)).

This sequence belongs to the class IV-like SAM-binding methyltransferase superfamily. TRM10 family.

The protein localises to the nucleus. Its subcellular location is the nucleolus. It is found in the chromosome. The catalysed reaction is guanosine(9) in tRNA + S-adenosyl-L-methionine = N(1)-methylguanosine(9) in tRNA + S-adenosyl-L-homocysteine + H(+). Its function is as follows. S-adenosyl-L-methionine-dependent guanine N(1)-methyltransferase that catalyzes the formation of N(1)-methylguanine at position 9 (m1G9) in tRNAs. Modulates Mettl3-mediated N6-methyladenosine (m6A) methylation of mRNA 5'-UTRs and 3'-UTRs independent of its methyltransferase activity; influences mRNA stability and protein levels, in particular of Hsp70 chaperone proteins and other stress response proteins. Also regulates stability of transcripts encoding proteins involved in signaling processes and proteins involved in neurogenesis and axon guidance pathways. This chain is tRNA (guanine(9)-N(1))-methyltransferase Trmt10A, found in Drosophila melanogaster (Fruit fly).